The sequence spans 982 residues: Serine/threonine-protein kinase ATG1 (982 aa).

The region spanning 19–324 is the Protein kinase domain; sequence FVIGAEIGKG…FENFFAHPVI (306 aa). ATP is bound by residues 25 to 33 and lysine 48; that span reads IGKGSFAQV. Aspartate 162 (proton acceptor) is an active-site residue. Disordered stretches follow at residues 334–506, 813–834, 898–918, and 947–982; these read DDIP…REKA, RLPDDHPSHPSNHPQGSESVNG, PKRRLSANMDDSGGDGEDGHA, and RMISNASKAQQQSQPQSLIRRRSGDVTPRSVPSYSS. Composition is skewed to basic and acidic residues over residues 335–359 and 372–387; these read DIPKPEASEQRSSSKDTRAASKSDD and HPTDNDQIRDQFRRVE. Residues 388-398 show a composition bias toward low complexity; that stretch reads PPSSAAESAPS. Over residues 463–481 the composition is skewed to polar residues; it reads SNASLNRSNRESSSPTSAA.

Belongs to the protein kinase superfamily. Ser/Thr protein kinase family. APG1/unc-51/ULK1 subfamily. As to quaternary structure, homodimer. Forms a ternary complex with ATG13 and ATG17. As to expression, uniformly detected in conidia, mycelia and appressoria (at protein level).

It is found in the cytoplasm. The protein resides in the preautophagosomal structure membrane. It carries out the reaction L-seryl-[protein] + ATP = O-phospho-L-seryl-[protein] + ADP + H(+). It catalyses the reaction L-threonyl-[protein] + ATP = O-phospho-L-threonyl-[protein] + ADP + H(+). Serine/threonine protein kinase involved in the cytoplasm to vacuole transport (Cvt) and found to be essential in autophagy, where it is required for the formation of autophagosomes. Involved in the clearance of protein aggregates which cannot be efficiently cleared by the proteasome. Required for selective autophagic degradation of the nucleus (nucleophagy) as well as for mitophagy which contributes to regulate mitochondrial quantity and quality by eliminating the mitochondria to a basal level to fulfill cellular energy requirements and preventing excess ROS production. Also involved in endoplasmic reticulum-specific autophagic process, in selective removal of ER-associated degradation (ERAD) substrates. Plays a key role in ATG9 and ATG23 cycling through the pre-autophagosomal structure and is necessary to promote ATG18 binding to ATG9 through phosphorylation of ATG9. Catalyzes phosphorylation of ATG4, decreasing the interaction between ATG4 and ATG8 and impairing deconjugation of PE-conjugated forms of ATG8. Autophagy is essential to fungal development, production of appressorium turgor, and pathogenicity in rice blast disease. The sequence is that of Serine/threonine-protein kinase ATG1 from Pyricularia oryzae (strain 70-15 / ATCC MYA-4617 / FGSC 8958) (Rice blast fungus).